We begin with the raw amino-acid sequence, 27 residues long: Chitinase 47 kDa (27 aa).

The GH18 domain maps to 3-27 (SKVVGYFTEWGTYDRKYYVKNIEXS).

Belongs to the glycosyl hydrolase 18 family. Chitinase class II subfamily. Homodimer.

The enzyme catalyses Random endo-hydrolysis of N-acetyl-beta-D-glucosaminide (1-&gt;4)-beta-linkages in chitin and chitodextrins.. Functionally, able to cleave chitin oligomers from N=3 to 6. This is Chitinase 47 kDa from Streptomyces olivaceoviridis (Streptomyces corchorusii).